The chain runs to 228 residues: 6-carboxyhexanoate--CoA ligase (228 aa).

It belongs to the BioW family. Homodimer. Mg(2+) serves as cofactor.

The catalysed reaction is heptanedioate + ATP + CoA = 6-carboxyhexanoyl-CoA + AMP + diphosphate. The protein operates within metabolic intermediate metabolism; pimeloyl-CoA biosynthesis; pimeloyl-CoA from pimelate: step 1/1. Catalyzes the transformation of pimelate into pimeloyl-CoA with concomitant hydrolysis of ATP to AMP. This Staphylococcus epidermidis (strain ATCC 35984 / DSM 28319 / BCRC 17069 / CCUG 31568 / BM 3577 / RP62A) protein is 6-carboxyhexanoate--CoA ligase.